We begin with the raw amino-acid sequence, 432 residues long: Gamma-glutamyl phosphate reductase (432 aa).

The protein belongs to the gamma-glutamyl phosphate reductase family.

It localises to the cytoplasm. It carries out the reaction L-glutamate 5-semialdehyde + phosphate + NADP(+) = L-glutamyl 5-phosphate + NADPH + H(+). Its pathway is amino-acid biosynthesis; L-proline biosynthesis; L-glutamate 5-semialdehyde from L-glutamate: step 2/2. Its function is as follows. Catalyzes the NADPH-dependent reduction of L-glutamate 5-phosphate into L-glutamate 5-semialdehyde and phosphate. The product spontaneously undergoes cyclization to form 1-pyrroline-5-carboxylate. The polypeptide is Gamma-glutamyl phosphate reductase (Corynebacterium melassecola).